The chain runs to 602 residues: Bifunctional lycopene cyclase/phytoene synthase (602 aa).

Residues 1–238 (MLTYMEVHLY…LVFASCATDR (238 aa)) are lycopene beta-cyclase. 7 helical membrane-spanning segments follow: residues 7–27 (VHLY…KPFF), 35–55 (YIFL…YIVY), 69–89 (VIGY…LITV), 110–130 (PVFQ…TIAA), 142–162 (PFYG…LWIG), 173–193 (AVLF…QYAI), and 211–231 (LPSL…VLVF). Positions 245 to 602 (IYITPMNHNK…RGKSQAFTVI (358 aa)) are phytoene synthase.

It in the N-terminal section; belongs to the lycopene beta-cyclase family. The protein in the C-terminal section; belongs to the phytoene/squalene synthase family.

The protein resides in the membrane. The enzyme catalyses all-trans-lycopene = gamma-carotene. It catalyses the reaction gamma-carotene = all-trans-beta-carotene. The catalysed reaction is 2 (2E,6E,10E)-geranylgeranyl diphosphate = 15-cis-phytoene + 2 diphosphate. It functions in the pathway carotenoid biosynthesis; beta-carotene biosynthesis. Its pathway is carotenoid biosynthesis; phytoene biosynthesis; all-trans-phytoene from geranylgeranyl diphosphate: step 1/1. Bifunctional enzyme that catalyzes the reactions from geranylgeranyl diphosphate to phytoene (phytoene synthase) and lycopene to beta-carotene via the intermediate gamma-carotene (lycopene cyclase). The protein is Bifunctional lycopene cyclase/phytoene synthase of Phycomyces blakesleeanus (strain ATCC 8743b / DSM 1359 / FGSC 10004 / NBRC 33097 / NRRL 1555).